Reading from the N-terminus, the 1956-residue chain is Sodium channel protein type 10 subunit alpha (1956 aa).

The Cytoplasmic portion of the chain corresponds to 1 to 125; sequence MEFPIGSLET…FNLIRRTAIK (125 aa). Residues 27 to 54 form a disordered region; that stretch reads QIAAKQGTKKAREKHREQKDQEEKPRPQ. Over residues 40–54 the composition is skewed to basic and acidic residues; that stretch reads KHREQKDQEEKPRPQ. An I repeat occupies 116-405; the sequence is FNLIRRTAIK…VTMAYEEQNQ (290 aa). The helical transmembrane segment at 126 to 149 threads the bilayer; it reads VSVHSWFSLFITVTILVNCVCMTR. Residues 150 to 154 lie on the Extracellular side of the membrane; it reads TDLPE. A helical membrane pass occupies residues 155–174; that stretch reads KIEYVFTVIYTFEALIKILA. The Cytoplasmic portion of the chain corresponds to 175-187; that stretch reads RGFCLNEFTYLRD. Residues 188–206 form a helical membrane-spanning segment; that stretch reads PWNWLDFSVITLAYVGTAI. Topologically, residues 207–212 are extracellular; the sequence is DLRGIS. A helical; Voltage-sensor membrane pass occupies residues 213–232; sequence GLRTFRVLRALKTVSVIPGL. Topologically, residues 233–248 are cytoplasmic; it reads KVIVGALIHSVKKLAD. A helical membrane pass occupies residues 249-272; it reads VTILTIFCLSVFALVGLQLFKGNL. Over 273–341 the chain is Extracellular; the sequence is KNKCVKNDMA…PDFNYTSFDS (69 aa). A disulfide bridge links Cys-276 with Cys-319. 4 N-linked (GlcNAc...) asparagine glycosylation sites follow: Asn-284, Asn-288, Asn-312, and Asn-335. Positions 342–366 form an intramembrane region, pore-forming; that stretch reads FAWAFLSLFRLMTQDSWERLYQQTL. At 367-373 the chain is on the extracellular side; it reads RTSGKIY. A helical transmembrane segment spans residues 374–399; sequence MIFFVLVIFLGSFYLVNLILAVVTMA. At 400–659 the chain is on the cytoplasmic side; the sequence is YEEQNQATTD…MWVKLKTILF (260 aa). Phosphoserine occurs at positions 441, 444, 467, and 479. Positions 443-454 are enriched in polar residues; the sequence is HSHNGSPLTSKN. Disordered stretches follow at residues 443-485 and 500-580; these read HSHN…YNQR and SHGS…LAPG. Positions 561-570 are enriched in basic and acidic residues; that stretch reads DSRHGEDEHQ. 2 positions are modified to phosphoserine: Ser-612 and Ser-615. The stretch at 647-911 is one II repeat; the sequence is CCPMWVKLKT…EDDGEVNNLQ (265 aa). The chain crosses the membrane as a helical span at residues 660–684; sequence GLVTDPFAELTITLCIVVNTIFMAM. Residues 685–695 are Extracellular-facing; the sequence is EHHGMSPTFEA. A helical transmembrane segment spans residues 696–719; the sequence is MLQIGNIVFTIFFTAEMVFKIIAF. Over 720–727 the chain is Cytoplasmic; it reads DPYYYFQK. Residues 728–747 traverse the membrane as a helical segment; that stretch reads KWNIFDCIIVTVSLLELGVA. Over 748–753 the chain is Extracellular; the sequence is KKGSLS. Residues 754 to 773 form a helical; Voltage-sensor membrane-spanning segment; that stretch reads VLRSFRLLRVFKLAKSWPTL. Over 774–789 the chain is Cytoplasmic; sequence NTLIKIIGNSVGALGN. A helical membrane pass occupies residues 790–810; it reads LTIILAIIVFVFALVGKQLLG. At 811-834 the chain is on the extracellular side; sequence ENYRNNRKNISAPHEDWPRWHMHD. A glycan (N-linked (GlcNAc...) asparagine) is linked at Asn-819. The pore-forming intramembrane region spans 835 to 855; it reads FFHSFLIVFRILCGEWIENMW. Topologically, residues 856–864 are extracellular; the sequence is ACMEVGQKS. Cysteines 857 and 866 form a disulfide. A helical transmembrane segment spans residues 865-890; sequence ICLILFLTVMVLGNLVVLNLFIALLL. The Cytoplasmic segment spans residues 891 to 1147; the sequence is NSFSADNLTA…GWQVRKTCYR (257 aa). Disordered stretches follow at residues 963 to 986 and 1041 to 1089; these read AANTARGSSGGLQAPRGPRDEHSD and DHLT…GSTV. One copy of the III repeat lies at 1140–1449; the sequence is QVRKTCYRIV…KKYYNAMKKL (310 aa). The helical transmembrane segment at 1148–1171 threads the bilayer; sequence IVEHSWFESFIIFMILLSSGSLAF. Over 1172–1184 the chain is Extracellular; that stretch reads EDYYLDQKPTVKA. A helical transmembrane segment spans residues 1185–1210; the sequence is LLEYTDRVFTFIFVFEMLLKWVAYGF. The Cytoplasmic portion of the chain corresponds to 1211-1216; that stretch reads KKYFTN. A helical transmembrane segment spans residues 1217-1238; that stretch reads AWCWLDFLIVNISLISLTAKIL. Residues 1239–1242 are Extracellular-facing; sequence EYSE. A helical; Voltage-sensor transmembrane segment spans residues 1243 to 1264; the sequence is VAPIKALRTLRALRPLRALSRF. Residues 1265-1283 lie on the Cytoplasmic side of the membrane; the sequence is EGMRVVVDALVGAIPSIMN. Residues 1284–1311 traverse the membrane as a helical segment; the sequence is VLLVCLIFWLIFSIMGVNLFAGKFWRCI. Asn-1312, Asn-1328, and Asn-1336 each carry an N-linked (GlcNAc...) asparagine glycan. At 1312–1353 the chain is on the extracellular side; that stretch reads NYTDGEFSLVPLSIVNNKSDCKIQNSTGSFFWVNVKVNFDNV. The pore-forming intramembrane region spans 1354-1375; sequence AMGYLALLQVATFKGWMDIMYA. Over 1376 to 1391 the chain is Extracellular; that stretch reads AVDSREVNMQPKWEDN. Residues 1392–1418 form a helical membrane-spanning segment; that stretch reads VYMYLYFVIFIIFGGFFTLNLFVGVII. The Cytoplasmic segment spans residues 1419 to 1471; sequence DNFNQQKKKLGGQDIFMTEEQKKYYNAMKKLGSKKPQKPIPRPLNKFQGFVFD. Position 1451 is a phosphoserine; by PKC (Ser-1451). Residues 1458 to 1757 form an IV repeat; the sequence is IPRPLNKFQG…WEKFDPEATQ (300 aa). The helical transmembrane segment at 1472-1495 threads the bilayer; that stretch reads IVTRQAFDITIMVLICLNMITMMV. Residues 1496-1506 are Extracellular-facing; it reads ETDDQSEEKTK. Residues 1507–1530 form a helical membrane-spanning segment; sequence ILGKINQFFVAVFTGECVMKMFAL. The Cytoplasmic segment spans residues 1531–1536; that stretch reads RQYYFT. Residues 1537–1560 traverse the membrane as a helical segment; sequence NGWNVFDFIVVVLSIASLIFSAIL. Residues 1561–1572 are Extracellular-facing; sequence KSLQSYFSPTLF. The chain crosses the membrane as a helical; Voltage-sensor span at residues 1573–1594; that stretch reads RVIRLARIGRILRLIRAAKGIR. Topologically, residues 1595-1609 are cytoplasmic; sequence TLLFALMMSLPALFN. The helical transmembrane segment at 1610-1632 threads the bilayer; the sequence is IGLLLFLVMFIYSIFGMSSFPHV. At 1633–1646 the chain is on the extracellular side; the sequence is RWEAGIDDMFNFQT. The segment at residues 1647 to 1669 is an intramembrane region (pore-forming); sequence FANSMLCLFQITTSAGWDGLLSP. Residues 1670–1697 are Extracellular-facing; the sequence is ILNTGPPYCDPNLPNSNGTRGDCGSPAV. N-linked (GlcNAc...) asparagine glycosylation is present at Asn-1686. The helical transmembrane segment at 1698-1722 threads the bilayer; that stretch reads GIIFFTTYIIISFLIMVNMYIAVIL. Over 1723-1956 the chain is Cytoplasmic; sequence ENFNVATEES…TSMELIAPGP (234 aa). The IQ domain maps to 1851–1880; that stretch reads EDISATVIQKAYRSYVLHRSMALSNTPCVP. Residues 1909 to 1956 form a disordered region; sequence SETASATSFPPSYESVTRGLSDRVNMRTSSSIQNEDEATSMELIAPGP.

This sequence belongs to the sodium channel (TC 1.A.1.10) family. Nav1.8/SCN10A subfamily. The channel consists of an ion conducting pore forming alpha-subunit regulated by one or more associated auxiliary subunits SCN1B, SCN2B and SCN3B; electrophysiological properties may vary depending on the type of the associated beta subunits. Found in a number of complexes with PRX, DYNLT1 and PDZD2. Interacts with proteins such as FSTL1, PRX, DYNLT1, PDZD2, S100A10 and many others. Interacts with NEDD4 and NEDD4L. Ubiquitinated by NEDD4L; which promotes its endocytosis. Post-translationally, phosphorylation at Ser-1451 by PKC in a highly conserved cytoplasmic loop slows inactivation of the sodium channel and reduces peak sodium currents. In terms of processing, lacks the cysteine which covalently binds the conotoxin GVIIJ. This cysteine (position 816) is speculated in other sodium channel subunits alpha to be implied in covalent binding with the sodium channel subunit beta-2 or beta-4. In terms of tissue distribution, expressed in the dorsal root ganglia and sciatic nerve.

Its subcellular location is the cell membrane. The enzyme catalyses Na(+)(in) = Na(+)(out). Tetrodotoxin-resistant channel that mediates the voltage-dependent sodium ion permeability of excitable membranes. Assuming opened or closed conformations in response to the voltage difference across the membrane, the protein forms a sodium-selective channel through which sodium ions may pass in accordance with their electrochemical gradient. Plays a role in neuropathic pain mechanisms. In Homo sapiens (Human), this protein is Sodium channel protein type 10 subunit alpha.